The following is an 80-amino-acid chain: Clavanin-C (80 aa).

An N-terminal signal peptide occupies residues 1-19 (MKTTILILLILGLGINAKS). Positions 20 to 29 (LEERKSEEEK) are excised as a propeptide. Phe-52 bears the Phenylalanine amide mark. Residues 54–80 (DDQQDNGKFYGHYAEDNGKHWYDTGDQ) constitute a propeptide that is removed on maturation.

Hemocytes and pharyngeal tissues.

It localises to the secreted. Its function is as follows. Has antimicrobial activity against E.coli, L.monocytogenes and C.albicans. This Styela clava (Sea squirt) protein is Clavanin-C.